A 101-amino-acid polypeptide reads, in one-letter code: Small ribosomal subunit protein uS14 (101 aa).

This sequence belongs to the universal ribosomal protein uS14 family. Part of the 30S ribosomal subunit. Contacts proteins S3 and S10.

Functionally, binds 16S rRNA, required for the assembly of 30S particles and may also be responsible for determining the conformation of the 16S rRNA at the A site. The protein is Small ribosomal subunit protein uS14 of Shewanella baltica (strain OS155 / ATCC BAA-1091).